We begin with the raw amino-acid sequence, 92 residues long: Small ribosomal subunit protein uS19c (92 aa).

It belongs to the universal ribosomal protein uS19 family.

The protein resides in the plastid. The protein localises to the chloroplast. In terms of biological role, protein S19 forms a complex with S13 that binds strongly to the 16S ribosomal RNA. The sequence is that of Small ribosomal subunit protein uS19c from Nicotiana sylvestris (Wood tobacco).